The sequence spans 140 residues: Nucleoside diphosphate kinase (140 aa).

ATP-binding residues include K11, F59, R87, T93, R104, and N114. H117 acts as the Pros-phosphohistidine intermediate in catalysis.

It belongs to the NDK family. Homotetramer. Requires Mg(2+) as cofactor.

It is found in the cytoplasm. It catalyses the reaction a 2'-deoxyribonucleoside 5'-diphosphate + ATP = a 2'-deoxyribonucleoside 5'-triphosphate + ADP. It carries out the reaction a ribonucleoside 5'-diphosphate + ATP = a ribonucleoside 5'-triphosphate + ADP. In terms of biological role, major role in the synthesis of nucleoside triphosphates other than ATP. The ATP gamma phosphate is transferred to the NDP beta phosphate via a ping-pong mechanism, using a phosphorylated active-site intermediate. The protein is Nucleoside diphosphate kinase of Ruegeria sp. (strain TM1040) (Silicibacter sp.).